Here is a 637-residue protein sequence, read N- to C-terminus: Formate--tetrahydrofolate ligase (637 aa).

81-88 contributes to the ATP binding site; it reads TPLGEGKS.

It belongs to the formate--tetrahydrofolate ligase family. In terms of assembly, homodimer.

It catalyses the reaction (6S)-5,6,7,8-tetrahydrofolate + formate + ATP = (6R)-10-formyltetrahydrofolate + ADP + phosphate. It functions in the pathway one-carbon metabolism; tetrahydrofolate interconversion. This chain is Formate--tetrahydrofolate ligase, found in Spinacia oleracea (Spinach).